The sequence spans 356 residues: Thrombopoietin (356 aa).

The first 21 residues, 1-21, serve as a signal peptide directing secretion; sequence MELTDLLLAAMLLAVARLTLS. Intrachain disulfides connect Cys-28–Cys-172 and Cys-50–Cys-106. N-linked (GlcNAc...) asparagine glycosylation is found at Asn-197, Asn-206, Asn-235, Asn-249, Asn-256, Asn-336, and Asn-351. The segment at 291-356 is disordered; it reads GGLPPSPSLA…PHPRNLSQET (66 aa). Residues 330–339 are compositionally biased toward polar residues; the sequence is PSTTMPNSTA.

Belongs to the EPO/TPO family. Found mainly in the liver, kidney and skeletal muscle.

The protein resides in the secreted. Its function is as follows. Lineage-specific cytokine affecting the proliferation and maturation of megakaryocytes from their committed progenitor cells. It acts at a late stage of megakaryocyte development. It may be the major physiological regulator of circulating platelets. This is Thrombopoietin (Thpo) from Mus musculus (Mouse).